Reading from the N-terminus, the 156-residue chain is uncharacterized protein (156 aa).

This is an uncharacterized protein from Methanocaldococcus jannaschii (strain ATCC 43067 / DSM 2661 / JAL-1 / JCM 10045 / NBRC 100440) (Methanococcus jannaschii).